Consider the following 424-residue polypeptide: UPF0597 protein Sputcn32_1209 (424 aa).

It belongs to the UPF0597 family.

This chain is UPF0597 protein Sputcn32_1209, found in Shewanella putrefaciens (strain CN-32 / ATCC BAA-453).